A 150-amino-acid chain; its full sequence is Truncated transcription factor CAULIFLOWER A (150 aa).

Residues 1–61 (MGRGRVEMKR…GKLFEYSSES (61 aa)) enclose the MADS-box domain. The 61-residue stretch at 90–150 (QTNWSMEYSR…IRSRKNQLMH (61 aa)) folds into the K-box; partial domain.

In terms of assembly, homodimer capable of binding to CArG-box sequences. Expressed in some of the meristems of arrest-stage cauliflower heads.

The protein resides in the nucleus. Probable transcription factor that promotes early floral meristem identity in synergy with APETALA1, FRUITFULL and LEAFY. Is required subsequently for the transition of an inflorescence meristem into a floral meristem. Seems to be partially redundant to the function of APETALA1. In Brassica oleracea var. botrytis (Cauliflower), this protein is Truncated transcription factor CAULIFLOWER A (CAL-A).